Reading from the N-terminus, the 220-residue chain is MPNVDDSVMGRQMPSSFDENHEFYNEKPMAKIFRKLREEPLIPLGAGLTVFAFTQAWRPMRRGDQVSANKMFRARVAAQGFTVLAMIAGSMYYNKDREATKELRKLKEERDSEEKRQKWIRELEIRDEEDKAMRARVMNRRAKAEEAKAGNASATPAEGGEAKSGVLNALGLSGSSSGWGKPGEAPLADASKAVDDEPIVSKVKTPTNVKRVSAEDDKTN.

Residues 13–104 (MPSSFDENHE…KDREATKELR (92 aa)) enclose the HIG1 domain. 2 helical membrane-spanning segments follow: residues 41–57 (LIPL…TQAW) and 76–93 (VAAQ…SMYY). A coiled-coil region spans residues 91–145 (MYYNKDREATKELRKLKEERDSEEKRQKWIRELEIRDEEDKAMRARVMNRRAKAE). The tract at residues 139 to 220 (NRRAKAEEAK…RVSAEDDKTN (82 aa)) is disordered. Low complexity predominate over residues 164-179 (SGVLNALGLSGSSSGW).

It belongs to the RCF1 family. As to quaternary structure, associates with the respiratory chain complex III/complex IV supercomplex.

The protein localises to the mitochondrion membrane. Functionally, cytochrome c oxidase subunit which plays a role in assembly of respiratory supercomplexes. This is Respiratory supercomplex factor 1, mitochondrial (RCF1) from Verticillium alfalfae (strain VaMs.102 / ATCC MYA-4576 / FGSC 10136) (Verticillium wilt of alfalfa).